The primary structure comprises 389 residues: Succinate--CoA ligase [ADP-forming] subunit beta (389 aa).

In terms of domain architecture, ATP-grasp spans Lys9–Lys236. ATP is bound by residues Lys45, Gly52–Gly54, Ser94, and Glu99. Residues Asn191 and Asp205 each contribute to the Mg(2+) site. Substrate is bound by residues Asn256 and Gly318–Thr320.

The protein belongs to the succinate/malate CoA ligase beta subunit family. In terms of assembly, heterotetramer of two alpha and two beta subunits. It depends on Mg(2+) as a cofactor.

The enzyme catalyses succinate + ATP + CoA = succinyl-CoA + ADP + phosphate. It carries out the reaction GTP + succinate + CoA = succinyl-CoA + GDP + phosphate. It functions in the pathway carbohydrate metabolism; tricarboxylic acid cycle; succinate from succinyl-CoA (ligase route): step 1/1. Its function is as follows. Succinyl-CoA synthetase functions in the citric acid cycle (TCA), coupling the hydrolysis of succinyl-CoA to the synthesis of either ATP or GTP and thus represents the only step of substrate-level phosphorylation in the TCA. The beta subunit provides nucleotide specificity of the enzyme and binds the substrate succinate, while the binding sites for coenzyme A and phosphate are found in the alpha subunit. The polypeptide is Succinate--CoA ligase [ADP-forming] subunit beta (Rhodococcus jostii (strain RHA1)).